Consider the following 100-residue polypeptide: Urease subunit gamma (100 aa).

This sequence belongs to the urease gamma subunit family. As to quaternary structure, heterotrimer of UreA (gamma), UreB (beta) and UreC (alpha) subunits. Three heterotrimers associate to form the active enzyme.

The protein localises to the cytoplasm. The enzyme catalyses urea + 2 H2O + H(+) = hydrogencarbonate + 2 NH4(+). It functions in the pathway nitrogen metabolism; urea degradation; CO(2) and NH(3) from urea (urease route): step 1/1. This chain is Urease subunit gamma, found in Vibrio parahaemolyticus.